Reading from the N-terminus, the 234-residue chain is Phosphoglycolate phosphatase (234 aa).

Asp8 serves as the catalytic Nucleophile. 2 residues coordinate Mg(2+): Asp8 and Asp10. Lys155 contributes to the substrate binding site. 2 residues coordinate Mg(2+): Asp178 and Asp182.

It belongs to the archaeal SPP-like hydrolase family. Mg(2+) serves as cofactor.

The catalysed reaction is 2-phosphoglycolate + H2O = glycolate + phosphate. Its function is as follows. Catalyzes the dephosphorylation of 2-phosphoglycolate. This chain is Phosphoglycolate phosphatase, found in Thermococcus sibiricus (strain DSM 12597 / MM 739).